Here is a 551-residue protein sequence, read N- to C-terminus: RanBD1 domain-containing protein C584.03c (551 aa).

Residues 1-309 (MDELLNVASH…LLLKYADDET (309 aa)) enclose the RanBD1 domain. Ser441 carries the phosphoserine modification. The segment at 522 to 551 (SVIPHSEPESSSKVINCQAKLNVEKEKKNP) is disordered.

The protein resides in the nucleus. The protein is RanBD1 domain-containing protein C584.03c of Schizosaccharomyces pombe (strain 972 / ATCC 24843) (Fission yeast).